Reading from the N-terminus, the 130-residue chain is Small ribosomal subunit protein uS8 (130 aa).

This sequence belongs to the universal ribosomal protein uS8 family. As to quaternary structure, part of the 30S ribosomal subunit. Contacts proteins S5 and S12.

In terms of biological role, one of the primary rRNA binding proteins, it binds directly to 16S rRNA central domain where it helps coordinate assembly of the platform of the 30S subunit. The polypeptide is Small ribosomal subunit protein uS8 (Buchnera aphidicola subsp. Baizongia pistaciae (strain Bp)).